The following is a 233-amino-acid chain: Zinc import ATP-binding protein ZnuC (233 aa).

Residues Ile6–Leu222 enclose the ABC transporter domain. ATP is bound at residue Gly38 to Thr45.

Belongs to the ABC transporter superfamily. Zinc importer (TC 3.A.1.15.5) family. As to quaternary structure, the complex is composed of two ATP-binding proteins (ZnuC), two transmembrane proteins (ZnuB) and a solute-binding protein (ZnuA).

The protein localises to the cell inner membrane. It catalyses the reaction Zn(2+)(out) + ATP(in) + H2O(in) = Zn(2+)(in) + ADP(in) + phosphate(in) + H(+)(in). Part of the ABC transporter complex ZnuABC involved in zinc import. Responsible for energy coupling to the transport system. The protein is Zinc import ATP-binding protein ZnuC of Rickettsia bellii (strain RML369-C).